The chain runs to 216 residues: DDB1- and CUL4-associated factor 16 (216 aa).

Residues 1-42 (MGPRNPSPDHLSESESEEEENISYLNESSGEEWDSSEEEDSM) are disordered. Residues 29-41 (SGEEWDSSEEEDS) show a composition bias toward acidic residues. Residue K61 is modified to N6-acetyllysine.

Interacts with DDB1 and CUL4A.

It localises to the nucleus. It functions in the pathway protein modification; protein ubiquitination. In terms of biological role, functions as a substrate recognition component for CUL4-DDB1 E3 ubiquitin-protein ligase complex, which mediates ubiquitination and proteasome-dependent degradation of nuclear proteins. The sequence is that of DDB1- and CUL4-associated factor 16 from Homo sapiens (Human).